We begin with the raw amino-acid sequence, 787 residues long: Endonuclease MutS2 (787 aa).

334–341 serves as a coordination point for ATP; that stretch reads GPNTGGKT. In terms of domain architecture, Smr spans 712-787; that stretch reads LDLRGKRYEE…GNGATIVTFK (76 aa).

Belongs to the DNA mismatch repair MutS family. MutS2 subfamily. As to quaternary structure, homodimer. Binds to stalled ribosomes, contacting rRNA.

Endonuclease that is involved in the suppression of homologous recombination and thus may have a key role in the control of bacterial genetic diversity. Functionally, acts as a ribosome collision sensor, splitting the ribosome into its 2 subunits. Detects stalled/collided 70S ribosomes which it binds and splits by an ATP-hydrolysis driven conformational change. Acts upstream of the ribosome quality control system (RQC), a ribosome-associated complex that mediates the extraction of incompletely synthesized nascent chains from stalled ribosomes and their subsequent degradation. Probably generates substrates for RQC. The sequence is that of Endonuclease MutS2 from Latilactobacillus sakei subsp. sakei (strain 23K) (Lactobacillus sakei subsp. sakei).